Here is a 345-residue protein sequence, read N- to C-terminus: MGPSWLLWTVAVAVLLLTRAASMEASSFCGHLEYWNSDKRCCSRCLQRFGPPACPDHEFTENCGLNDFGDTVAHPFKKCSPGYCNPNGTELCSQCSSGAAAAPAHVESPGRTHKQCRKKPVPPKDVCPLKPEDAGASSSPGRWSLGQTTKNEVSSRPGFVSASVLPLAVLPLLLVLLLILAVVLLSLFKRKVRSRPGSSSAFGDPSTSLHYWPCPGTLEVLESRNRGKANLLQLSSWELQGLASQPLSLLLDELEVLEELIMLLDPEPGPSGSTAYGTTRHLAARYGLPATWSTFAYSLRPSRSPLRALIEMVVAREPSATLGQFGTYLAQLGRTDALQVLSKLG.

The first 20 residues, 1 to 20, serve as a signal peptide directing secretion; it reads MGPSWLLWTVAVAVLLLTRA. The Extracellular segment spans residues 21 to 163; sequence ASMEASSFCG…SSRPGFVSAS (143 aa). N87 carries an N-linked (GlcNAc...) asparagine glycan. The interval 106 to 149 is disordered; sequence VESPGRTHKQCRKKPVPPKDVCPLKPEDAGASSSPGRWSLGQTT. The segment covering 111–121 has biased composition (basic residues); that stretch reads RTHKQCRKKPV. Positions 136 to 149 are enriched in polar residues; it reads ASSSPGRWSLGQTT. Residues 164–184 form a helical membrane-spanning segment; sequence VLPLAVLPLLLVLLLILAVVL. The Cytoplasmic segment spans residues 185-345; that stretch reads LSLFKRKVRS…DALQVLSKLG (161 aa).

Ubiquitously expressed with higher expression in lymph node. Highly expressed in T-cells and monocytes.

It localises to the cell membrane. Functionally, probable cell membrane receptor for the IGF-like family protein IGFL. The protein is IGF-like family receptor 1 (Igflr1) of Mus musculus (Mouse).